We begin with the raw amino-acid sequence, 509 residues long: 2-isopropylmalate synthase (509 aa).

The Pyruvate carboxyltransferase domain occupies 5–267; that stretch reads IQIFDTTLRD…QTALNLEETK (263 aa). Aspartate 14, histidine 202, histidine 204, and asparagine 238 together coordinate Mn(2+). The segment at 391–509 is regulatory domain; sequence KLETLQLQYV…AAENVEKVGN (119 aa).

Belongs to the alpha-IPM synthase/homocitrate synthase family. LeuA type 1 subfamily. In terms of assembly, homodimer. Mn(2+) is required as a cofactor.

Its subcellular location is the cytoplasm. The enzyme catalyses 3-methyl-2-oxobutanoate + acetyl-CoA + H2O = (2S)-2-isopropylmalate + CoA + H(+). It participates in amino-acid biosynthesis; L-leucine biosynthesis; L-leucine from 3-methyl-2-oxobutanoate: step 1/4. Catalyzes the condensation of the acetyl group of acetyl-CoA with 3-methyl-2-oxobutanoate (2-ketoisovalerate) to form 3-carboxy-3-hydroxy-4-methylpentanoate (2-isopropylmalate). This Staphylococcus aureus (strain MRSA252) protein is 2-isopropylmalate synthase.